A 433-amino-acid chain; its full sequence is Putative zinc metalloprotease BB_0118 (433 aa).

Position 17 (His17) interacts with Zn(2+). The active site involves Glu18. His21 serves as a coordination point for Zn(2+). A helical membrane pass occupies residues 98–120 (ILIYFAGPLFNLIFSFIVFIFIS). One can recognise a PDZ domain in the interval 193–265 (TVSLQDFLKE…VVEIKFSRNG (73 aa)). 3 consecutive transmembrane segments (helical) span residues 334–356 (VSGP…LYWI), 366–388 (LAGM…FISF), and 401–423 (TIYS…GLFN).

Belongs to the peptidase M50B family. The cofactor is Zn(2+).

The protein localises to the cell inner membrane. This chain is Putative zinc metalloprotease BB_0118, found in Borreliella burgdorferi (strain ATCC 35210 / DSM 4680 / CIP 102532 / B31) (Borrelia burgdorferi).